A 143-amino-acid chain; its full sequence is Nucleoside diphosphate kinase (143 aa).

Residues Lys11, Phe59, Arg87, Thr93, Arg104, and Asn114 each coordinate ATP. The active-site Pros-phosphohistidine intermediate is His117.

This sequence belongs to the NDK family. Homotetramer. Requires Mg(2+) as cofactor.

The protein localises to the cytoplasm. It catalyses the reaction a 2'-deoxyribonucleoside 5'-diphosphate + ATP = a 2'-deoxyribonucleoside 5'-triphosphate + ADP. It carries out the reaction a ribonucleoside 5'-diphosphate + ATP = a ribonucleoside 5'-triphosphate + ADP. Its function is as follows. Major role in the synthesis of nucleoside triphosphates other than ATP. The ATP gamma phosphate is transferred to the NDP beta phosphate via a ping-pong mechanism, using a phosphorylated active-site intermediate. The polypeptide is Nucleoside diphosphate kinase (Cronobacter sakazakii (strain ATCC BAA-894) (Enterobacter sakazakii)).